The chain runs to 483 residues: Alpha-tubulin N-acetyltransferase (483 aa).

One can recognise an N-acetyltransferase domain in the interval 1-186 (MEFRFNMHPL…NNFVVYEGFF (186 aa)). Acetyl-CoA is bound by residues 120–133 (FYVHESRQRGGLGR) and 156–165 (SEKLLGFLQK). Disordered stretches follow at residues 204–231 (TASPNTNLFGPTFTTTEERRRSTSQTRT), 330–395 (ETLP…VLGS), and 437–472 (SVKINRPIGKSGTRGSLHDDNESVHSNGSQQGGGGH). A compositionally biased stretch (basic and acidic residues) spans 347 to 369 (YDFHPHHLELHDDTEGGGSHRDQ). Residues 370–383 (SLSPQSVSQQASPV) show a composition bias toward low complexity.

It belongs to the acetyltransferase ATAT1 family.

The enzyme catalyses L-lysyl-[alpha-tubulin] + acetyl-CoA = N(6)-acetyl-L-lysyl-[alpha-tubulin] + CoA + H(+). Functionally, specifically acetylates 'Lys-40' in alpha-tubulin on the lumenal side of microtubules. Promotes microtubule destabilization and accelerates microtubule dynamics; this activity may be independent of acetylation activity. Acetylates alpha-tubulin with a slow enzymatic rate, due to a catalytic site that is not optimized for acetyl transfer. Enters the microtubule through each end and diffuses quickly throughout the lumen of microtubules. Acetylates only long/old microtubules because of its slow acetylation rate since it does not have time to act on dynamically unstable microtubules before the enzyme is released. The chain is Alpha-tubulin N-acetyltransferase from Anopheles gambiae (African malaria mosquito).